A 318-amino-acid polypeptide reads, in one-letter code: 2,4-dinitroanisole O-demethylase subunit beta (318 aa).

It belongs to the metallo-beta-lactamase superfamily. In terms of assembly, part of the complex DnhAB composed of the 2,4-dinitroanisole O-demethylase alpha (DnhA) and beta (DnhB) subunits.

It carries out the reaction 2,4-dinitroanisole + H2O = 2,4-dinitrophenol + methanol + H(+). Involved in the degradation of 2,4-dinitroanisole (DNAN), an insensitive munition ingredient used in explosive formulations as a replacement for 2,4,6-trinitrotoluene (TNT). Catalyzes the removal of the methyl group from 2,4-dinitroanisole (DNAN) to yield 2,4-dinitrophenol (2,4-DNP) and methanol. The sequence is that of 2,4-dinitroanisole O-demethylase subunit beta from Nocardioides sp. (strain JS1661).